We begin with the raw amino-acid sequence, 944 residues long: Leucine--tRNA ligase 2 (944 aa).

Positions 36–46 match the 'HIGH' region motif; sequence PYPNSPWHIGH. The 'KMSKS' region signature appears at 623–627; the sequence is KMSKS. K626 serves as a coordination point for ATP.

This sequence belongs to the class-I aminoacyl-tRNA synthetase family.

The protein resides in the cytoplasm. It catalyses the reaction tRNA(Leu) + L-leucine + ATP = L-leucyl-tRNA(Leu) + AMP + diphosphate. This is Leucine--tRNA ligase 2 from Saccharolobus solfataricus (strain ATCC 35092 / DSM 1617 / JCM 11322 / P2) (Sulfolobus solfataricus).